Consider the following 697-residue polypeptide: Polyribonucleotide nucleotidyltransferase (697 aa).

Residues aspartate 490 and aspartate 496 each contribute to the Mg(2+) site. The 60-residue stretch at 557-616 (PKVVTMTIKPEKIRDVIGPGGKKINEIIDETGVKLDIEQDGTIFIGAVDKDAIARARSII) folds into the KH domain. Positions 626 to 694 (GQVYEGKVKR…KQGRVNASHK (69 aa)) constitute an S1 motif domain.

The protein belongs to the polyribonucleotide nucleotidyltransferase family. The cofactor is Mg(2+).

Its subcellular location is the cytoplasm. It catalyses the reaction RNA(n+1) + phosphate = RNA(n) + a ribonucleoside 5'-diphosphate. Involved in mRNA degradation. Catalyzes the phosphorolysis of single-stranded polyribonucleotides processively in the 3'- to 5'-direction. This Staphylococcus saprophyticus subsp. saprophyticus (strain ATCC 15305 / DSM 20229 / NCIMB 8711 / NCTC 7292 / S-41) protein is Polyribonucleotide nucleotidyltransferase.